A 218-amino-acid polypeptide reads, in one-letter code: Twisted gastrulation protein homolog 1-B (218 aa).

Residues 1-25 form the signal peptide; it reads MKPSFLHIPAAALLLCSLWILPIHC. N-linked (GlcNAc...) asparagine glycans are attached at residues Asn52, Asn81, and Asn147.

This sequence belongs to the twisted gastrulation protein family. As to quaternary structure, binds directly to bmp2, bmp4 and bmp7 and can form a ternary complex with bmps and chordin, thus preventing the binding of bmps to their cell surface receptors.

It localises to the secreted. Its function is as follows. Involved in dorsal-ventral patterning, permitting peak BMP signaling by antagonizing the residual anti-BMP activity of the cleavage products of chrd. Functions to promote the formation of ventral mesoderm by increasing the activity of bmp7 and other BMPS. Seems to antagonize BMP signaling by forming ternary complexes with chrd and BMPs, thereby preventing BMPs from binding to their receptors. In addition to the anti-BMP function, also has pro-BMP activity, partly mediated by cleavage and degradation of chrd, which releases BMPs from ternary complexes. May be an important modulator of BMP-regulated cartilage development and chondrocyte differentiation. The polypeptide is Twisted gastrulation protein homolog 1-B (twsg1-b) (Xenopus laevis (African clawed frog)).